Here is a 613-residue protein sequence, read N- to C-terminus: MGKVVGIDLGTTNSVVAAIEGGQPSVIINAEGLRTTPSIVAYTKKEELLVGQIAKRQAVINPENTFFSVKRFIGSKEGEISKEAKKLPYKVSNDQNNNIKIKCPALNRDFSPEEISAQVLRKLINDATDYLGQEVTQAVITVPAYFNDSQRQATMDAGKIAGVEVLRIINEPTAASLAYGLDKKQNETILVFDLGGGTFDVSILEVGDGIFEVLSTAGDTNLGGDDFDNVLVNWLINDFKEKNNIDLGNDVQALQRLTEAAEKAKVELSTVEKTTIHLPFITADKTGPKHIEQELTRDVFENLCQALINRCRIPVEKSLNDARLDKADINEIVLVGGSTRIPAVQNLVESLTGKKPNQSVNPDEVVAIGAAIQAGILAGEIKDILLLDVTPLSLGVETLGGVMTKIIARNTTIPVKKSEMFSTAVDNQTNVEIHILQGERELVAGNKSLGNFRLDGIPAADRGAPQIEVTFDIDVDGILSVKAREKETGVEQAVTIQGASNLNEKEVEEMLVEAEKFASADKVKRENIDVKNQAEALCFEAEKEVSSFNDTVPENKKQNIKTLIENIRQAVQTDNFETLKEQMEELKTAMKDIVALKSTNDTATDPMSNLNDL.

Belongs to the heat shock protein 70 family.

It is found in the plastid. It localises to the chloroplast. Functionally, acts as a chaperone. The polypeptide is Chaperone protein dnaK (Phaeodactylum tricornutum (strain CCAP 1055/1)).